We begin with the raw amino-acid sequence, 382 residues long: Mannitol-1-phosphate 5-dehydrogenase (382 aa).

3–14 is an NAD(+) binding site; it reads ALHFGAGNIGRG.

The protein belongs to the mannitol dehydrogenase family.

It carries out the reaction D-mannitol 1-phosphate + NAD(+) = beta-D-fructose 6-phosphate + NADH + H(+). This Mannheimia succiniciproducens (strain KCTC 0769BP / MBEL55E) protein is Mannitol-1-phosphate 5-dehydrogenase.